The primary structure comprises 492 residues: UDP-N-acetylmuramoyl-L-alanyl-D-glutamate--2,6-diaminopimelate ligase (492 aa).

Serine 30 contributes to the UDP-N-acetyl-alpha-D-muramoyl-L-alanyl-D-glutamate binding site. Glycine 114–serine 120 contributes to the ATP binding site. Residues threonine 156–threonine 157, serine 183, glutamine 189, and arginine 191 each bind UDP-N-acetyl-alpha-D-muramoyl-L-alanyl-D-glutamate. The residue at position 223 (lysine 223) is an N6-carboxylysine. Meso-2,6-diaminopimelate is bound by residues arginine 389, aspartate 413–arginine 416, glycine 462, and glutamate 466. The Meso-diaminopimelate recognition motif motif lies at aspartate 413–arginine 416.

The protein belongs to the MurCDEF family. MurE subfamily. Mg(2+) is required as a cofactor. Carboxylation is probably crucial for Mg(2+) binding and, consequently, for the gamma-phosphate positioning of ATP.

It is found in the cytoplasm. It carries out the reaction UDP-N-acetyl-alpha-D-muramoyl-L-alanyl-D-glutamate + meso-2,6-diaminopimelate + ATP = UDP-N-acetyl-alpha-D-muramoyl-L-alanyl-gamma-D-glutamyl-meso-2,6-diaminopimelate + ADP + phosphate + H(+). It functions in the pathway cell wall biogenesis; peptidoglycan biosynthesis. Functionally, catalyzes the addition of meso-diaminopimelic acid to the nucleotide precursor UDP-N-acetylmuramoyl-L-alanyl-D-glutamate (UMAG) in the biosynthesis of bacterial cell-wall peptidoglycan. This is UDP-N-acetylmuramoyl-L-alanyl-D-glutamate--2,6-diaminopimelate ligase from Neisseria meningitidis serogroup B (strain ATCC BAA-335 / MC58).